The following is a 721-amino-acid chain: Solute carrier family 12 member 8 (721 aa).

11 helical membrane-spanning segments follow: residues 53–73 (FGTW…VVLF), 84–104 (GVLL…VTVL), 115–135 (IGSG…VGGT), 136–156 (IGVL…TGFA), 174–194 (ISLA…KWII), 196–216 (LQLL…IGSF), 247–267 (FFTV…GFNM), 283–303 (LAAI…LGAI), 321–341 (LVGG…CMGG), 374–394 (PVAA…IGQV), and 397–417 (LAPI…YSYF). Disordered stretches follow at residues 473–505 (PNHT…KQTL) and 533–580 (NESQ…STVA). Residues 553–565 (TESDEPDSEEDVD) are compositionally biased toward acidic residues. 2 helical membrane passes run 606–626 (FLGA…YALV) and 628–648 (LGVA…LNPG).

This sequence belongs to the SLC12A transporter family.

Its subcellular location is the membrane. Its function is as follows. Cation/chloride cotransporter. In Xenopus laevis (African clawed frog), this protein is Solute carrier family 12 member 8 (slc12a8).